Reading from the N-terminus, the 620-residue chain is Protein regulator of cytokinesis 1 (620 aa).

Residues 1 to 303 are required for the interaction with KIF4A; that stretch reads MRRSEVLAEE…IEAIRVELVQ (303 aa). Residues 1-341 are dimerization; sequence MRRSEVLAEE…QLHDAEIVRL (341 aa). Coiled-coil stretches lie at residues 96–133, 211–304, and 383–463; these read ILQLEKDLRTQVELMRKQKKERKQELKLLQEQDQELCE, SLEN…LVQY, and GNLL…TEML. The interval 342–466 is spectrin-fold; the sequence is KNYYEVHKEL…QTETEMLYGS (125 aa). A compositionally biased stretch (basic and acidic residues) spans 446 to 459; sequence AKQERQLKNKKQTE. Residues 446–488 are disordered; sequence AKQERQLKNKKQTETEMLYGSAPRTPSKRRGLAPNTPGKARKL. The interval 467–620 is unstructured, Arg/Lys rich; the sequence is APRTPSKRRG…GILNSTNIQS (154 aa). T470 and T481 each carry phosphothreonine; by CDK1. S513, R541, and S571 each carry phosphoserine. Positions 517–545 are disordered; the sequence is RLPPSGSKPVAASTCSGKKTPRTGRHGAN. At T578 the chain carries Phosphothreonine. Positions 600–620 are disordered; that stretch reads LSKASKSDATSGILNSTNIQS. A compositionally biased stretch (polar residues) spans 606 to 620; it reads SDATSGILNSTNIQS. T616 carries the phosphothreonine; by PLK1 modification.

Belongs to the MAP65/ASE1 family. Homodimer. Interacts with the C-terminal Rho-GAP domain and the basic region of RACGAP1. The interaction with RACGAP1 inhibits its GAP activity towards CDC42 in vitro, which may be required for maintaining normal spindle morphology. Interacts (via N-terminus) with the C-terminus of CENPE (via C-terminus); the interaction occurs during late mitosis. Interacts (via N-terminus) with KIF4A (via C-terminus); the interaction is required for the progression of mitosis. Interacts (via N-terminus) with KIF23 (via C-terminus); the interaction occurs during late mitosis. Interacts with KIF14 and KIF20A. Interacts with PLK1. Interacts with KIF20B. Interacts with CCDC66. Phosphorylation by CDK1 in early mitosis holds PRC1 in an inactive monomeric state, during the metaphase to anaphase transition, PRC1 is dephosphorylated, promoting interaction with KIF4A, which then translocates PRC1 along mitotic spindles to the plus ends of antiparallel interdigitating microtubules. Dephosphorylation also promotes MT-bundling activity by allowing dimerization. Phosphorylation by CDK1 prevents PLK1-binding: upon degradation of CDK1 at anaphase and dephosphorylation, it is then phosphorylated by PLK1, leading to cytokinesis. In terms of tissue distribution, overexpressed in bladder cancer cells.

The protein localises to the nucleus. The protein resides in the cytoplasm. It is found in the cytoskeleton. It localises to the spindle pole. Its subcellular location is the midbody. The protein localises to the chromosome. In terms of biological role, key regulator of cytokinesis that cross-links antiparrallel microtubules at an average distance of 35 nM. Essential for controlling the spatiotemporal formation of the midzone and successful cytokinesis. Required for KIF14 localization to the central spindle and midbody. Required to recruit PLK1 to the spindle. Stimulates PLK1 phosphorylation of RACGAP1 to allow recruitment of ECT2 to the central spindle. Acts as an oncogene for promoting bladder cancer cells proliferation, apoptosis inhibition and carcinogenic progression. The chain is Protein regulator of cytokinesis 1 from Homo sapiens (Human).